Reading from the N-terminus, the 808-residue chain is Phospholipase D alpha 1 (808 aa).

In terms of domain architecture, C2 spans 1 to 125 (MAHYLMHGTL…IRGDQVDRWV (125 aa)). Asp-186 serves as a coordination point for Ca(2+). A PLD phosphodiesterase 1 domain is found at 326-364 (TMFTHHQKIVVVDGEMPSGESQMRRIVSFVGGIDLCDGR). Active-site residues include His-331, Lys-333, and Asp-338. His-331 lines the a 1,2-diacyl-sn-glycero-3-phosphate pocket. His-370 and His-404 together coordinate Ca(2+). A 1,2-diacyl-sn-glycero-3-phosphate is bound by residues Gln-520 and His-659. Positions 654–681 (FMIYVHTKMMIVDDEYIIVGSANINQRS) constitute a PLD phosphodiesterase 2 domain. Catalysis depends on residues His-659, Lys-661, and Asp-666. Position 720 (Glu-720) interacts with Ca(2+).

The protein belongs to the phospholipase D family. C2-PLD subfamily. Requires Ca(2+) as cofactor.

It carries out the reaction a 1,2-diacyl-sn-glycero-3-phosphocholine + H2O = a 1,2-diacyl-sn-glycero-3-phosphate + choline + H(+). Functionally, hydrolyzes glycerol-phospholipids at the terminal phosphodiesteric bond. Plays an important role in various cellular processes. The sequence is that of Phospholipase D alpha 1 from Carica papaya (Papaya).